Consider the following 275-residue polypeptide: Light-independent protochlorophyllide reductase iron-sulfur ATP-binding protein (275 aa).

Residues 10-15 (GIGKST) and Lys-39 contribute to the ATP site. Ser-14 lines the Mg(2+) pocket. [4Fe-4S] cluster contacts are provided by Cys-95 and Cys-129. An ATP-binding site is contributed by 180-181 (NR).

This sequence belongs to the NifH/BchL/ChlL family. As to quaternary structure, homodimer. Protochlorophyllide reductase is composed of three subunits; ChlL, ChlN and ChlB. [4Fe-4S] cluster serves as cofactor.

It catalyses the reaction chlorophyllide a + oxidized 2[4Fe-4S]-[ferredoxin] + 2 ADP + 2 phosphate = protochlorophyllide a + reduced 2[4Fe-4S]-[ferredoxin] + 2 ATP + 2 H2O. It functions in the pathway porphyrin-containing compound metabolism; chlorophyll biosynthesis (light-independent). In terms of biological role, component of the dark-operative protochlorophyllide reductase (DPOR) that uses Mg-ATP and reduced ferredoxin to reduce ring D of protochlorophyllide (Pchlide) to form chlorophyllide a (Chlide). This reaction is light-independent. The L component serves as a unique electron donor to the NB-component of the complex, and binds Mg-ATP. In Gloeobacter violaceus (strain ATCC 29082 / PCC 7421), this protein is Light-independent protochlorophyllide reductase iron-sulfur ATP-binding protein.